Reading from the N-terminus, the 414-residue chain is Carbohydrate sulfotransferase 12 (414 aa).

At 1 to 5 (MTKAR) the chain is on the cytoplasmic side. The helical; Signal-anchor for type II membrane protein transmembrane segment at 6–26 (LFRLWLVLGSVFMILLIIVYW) threads the bilayer. The Lumenal segment spans residues 27 to 414 (DSAGAAHFYL…YPKPENLLRD (388 aa)). Residues 80–125 (QSDLPRKETEQPPAPGSMEESVRGYDWSPRDARRSPDQGRQQAERR) are disordered. The segment covering 99 to 125 (ESVRGYDWSPRDARRSPDQGRQQAERR) has biased composition (basic and acidic residues). Asparagine 134 carries N-linked (GlcNAc...) asparagine glycosylation. Position 171-177 (171-177 (PKVACTN)) interacts with 3'-phosphoadenylyl sulfate. Residue asparagine 209 is glycosylated (N-linked (GlcNAc...) asparagine). 245-253 (RDPFVRLIS) lines the 3'-phosphoadenylyl sulfate pocket. N-linked (GlcNAc...) asparagine glycosylation is found at asparagine 280 and asparagine 370.

The protein belongs to the sulfotransferase 2 family. Widely expressed. Expressed a high level in spinal chord, heart, spleen, thyroid, pituitary gland, adrenal gland, peripheral blood leukocytes, thymus, lung, small intestine, fetal kidney, fetal spleen and fetal lung.

It localises to the golgi apparatus membrane. It catalyses the reaction chondroitin beta-D-glucuronate + n 3'-phosphoadenylyl sulfate = chondroitin 4'-sulfate + n adenosine 3',5'-bisphosphate + n H(+). Catalyzes the transfer of sulfate to position 4 of the N-acetylgalactosamine (GalNAc) residue of chondroitin and desulfated dermatan sulfate. Chondroitin sulfate constitutes the predominant proteoglycan present in cartilage and is distributed on the surfaces of many cells and extracellular matrices. Activity toward partially desulfated dermatan sulfate is however lower. Does not form 4, 6-di-O-sulfated GalNAc when chondroitin sulfate C is used as an acceptor. In Homo sapiens (Human), this protein is Carbohydrate sulfotransferase 12 (CHST12).